We begin with the raw amino-acid sequence, 52 residues long: Rubredoxin (52 aa).

Positions 1 to 52 constitute a Rubredoxin-like domain; sequence MKKYVCTVCGYEYDPAEGDPDNGVKPGTSFDDLPADWVCPVCGAPKSEFEAA. The Fe cation site is built by Cys-6, Cys-9, Cys-39, and Cys-42.

This sequence belongs to the rubredoxin family. It depends on Fe(3+) as a cofactor.

It localises to the cytoplasm. Rubredoxin is a small nonheme, iron protein lacking acid-labile sulfide. Its single Fe, chelated to 4 Cys, functions as an electron acceptor and may also stabilize the conformation of the molecule. Functionally, electron acceptor for cytoplasmic lactate dehydrogenase. The polypeptide is Rubredoxin (rub) (Nitratidesulfovibrio vulgaris (strain ATCC 29579 / DSM 644 / CCUG 34227 / NCIMB 8303 / VKM B-1760 / Hildenborough) (Desulfovibrio vulgaris)).